The chain runs to 419 residues: S-adenosylmethionine synthase (419 aa).

Residue H15 coordinates ATP. A Mg(2+)-binding site is contributed by D17. Residue E43 coordinates K(+). L-methionine-binding residues include E56 and Q100. The flexible loop stretch occupies residues Q100–E110. Residues D171–K173, K248–F249, D257, R263–K264, A280, and K284 contribute to the ATP site. Position 257 (D257) interacts with L-methionine. An L-methionine-binding site is contributed by K288.

This sequence belongs to the AdoMet synthase family. In terms of assembly, homotetramer; dimer of dimers. Mg(2+) is required as a cofactor. It depends on K(+) as a cofactor.

The protein resides in the cytoplasm. It carries out the reaction L-methionine + ATP + H2O = S-adenosyl-L-methionine + phosphate + diphosphate. It functions in the pathway amino-acid biosynthesis; S-adenosyl-L-methionine biosynthesis; S-adenosyl-L-methionine from L-methionine: step 1/1. Its function is as follows. Catalyzes the formation of S-adenosylmethionine (AdoMet) from methionine and ATP. The overall synthetic reaction is composed of two sequential steps, AdoMet formation and the subsequent tripolyphosphate hydrolysis which occurs prior to release of AdoMet from the enzyme. The chain is S-adenosylmethionine synthase from Synechococcus sp. (strain CC9311).